Here is a 363-residue protein sequence, read N- to C-terminus: MKITNDNAATINYWLAIVEPFLTSDEDRNSDDIIRKFRAVVAEHGDTEEVDPEVFFAIFSILATKYGRVYSKKVEELNESLKAAILAGAEAEDLRNKLKDISQRYASQLEITADREQQLESLKKKGHEQPLTGSGSSEPVHAESAHAPQLHVVNDLQQFYIPFNEYPSLTQSIGTSDIANDEHLKRVQLTLKITDTKVFSRTGFEFAISCGSRSTSDKDPYDGIIKISGKSHMRKDIAYAIRTSGITVRQFCAAFANLYWNFNLARNTPPENWRKKGFTEGTKFAAFDFFYAVGSNAAIPTEADGSVRLIRPPTNEENEANSAMRYADIYEQNSKTAGHVTSSPLYNRGSSYESKNKAKLLEM.

Residues K72–I111 adopt a coiled-coil conformation. A disordered region spans residues L122–S144.

It is found in the virion. This is Capsid protein from Citrus leaf blotch virus (isolate Nagami kumquat/France/SRA-153/1984) (CLBV).